Consider the following 165-residue polypeptide: ATP synthase subunit b (165 aa).

Residues 5–27 (INSTTLGNIIITLGSVFLLYYLI) form a helical membrane-spanning segment.

It belongs to the ATPase B chain family. As to quaternary structure, F-type ATPases have 2 components, F(1) - the catalytic core - and F(0) - the membrane proton channel. F(1) has five subunits: alpha(3), beta(3), gamma(1), delta(1), epsilon(1). F(0) has three main subunits: a(1), b(2) and c(10-14). The alpha and beta chains form an alternating ring which encloses part of the gamma chain. F(1) is attached to F(0) by a central stalk formed by the gamma and epsilon chains, while a peripheral stalk is formed by the delta and b chains.

It is found in the cell membrane. F(1)F(0) ATP synthase produces ATP from ADP in the presence of a proton or sodium gradient. F-type ATPases consist of two structural domains, F(1) containing the extramembraneous catalytic core and F(0) containing the membrane proton channel, linked together by a central stalk and a peripheral stalk. During catalysis, ATP synthesis in the catalytic domain of F(1) is coupled via a rotary mechanism of the central stalk subunits to proton translocation. Functionally, component of the F(0) channel, it forms part of the peripheral stalk, linking F(1) to F(0). This Streptococcus thermophilus (strain CNRZ 1066) protein is ATP synthase subunit b.